The sequence spans 861 residues: Leucine--tRNA ligase (861 aa).

Positions 42 to 52 (PYPSGKLHMGH) match the 'HIGH' region motif. The short motif at 618–622 (KMSKS) is the 'KMSKS' region element. Lys621 lines the ATP pocket.

The protein belongs to the class-I aminoacyl-tRNA synthetase family.

It localises to the cytoplasm. The catalysed reaction is tRNA(Leu) + L-leucine + ATP = L-leucyl-tRNA(Leu) + AMP + diphosphate. The chain is Leucine--tRNA ligase from Buchnera aphidicola subsp. Baizongia pistaciae (strain Bp).